Consider the following 527-residue polypeptide: RUS family member 1 (527 aa).

An N-linked (GlcNAc...) asparagine glycan is attached at Asn-21. The chain crosses the membrane as a helical span at residues 220 to 240 (SQETAVNLVGMLLSVIVSSFI). Asn-243 carries an N-linked (GlcNAc...) asparagine glycan. Residues 245 to 265 (SLIVTWLVFLFFTSLHLFCNY) traverse the membrane as a helical segment. The N-linked (GlcNAc...) asparagine glycan is linked to Asn-346. Residues 350 to 426 (TKNVNNNNNN…NNNNNNNNNK (77 aa)) form a disordered region. 2 N-linked (GlcNAc...) asparagine glycosylation sites follow: Asn-467 and Asn-497.

The protein belongs to the RUS1 family.

The protein resides in the membrane. The chain is RUS family member 1 (rusf1) from Dictyostelium discoideum (Social amoeba).